We begin with the raw amino-acid sequence, 460 residues long: Methionine aminopeptidase 2-1 (460 aa).

Residues M1 to P90 form a disordered region. Residues S30 to G39 are compositionally biased toward low complexity. Acidic residues predominate over residues E42 to E52. The segment covering T69 to S81 has biased composition (basic residues). Substrate is bound at residue H212. A divalent metal cation contacts are provided by D233, D244, and H313. H321 is a substrate binding site. The a divalent metal cation site is built by E346 and E441.

The protein belongs to the peptidase M24A family. Methionine aminopeptidase eukaryotic type 2 subfamily. Requires Co(2+) as cofactor. Zn(2+) serves as cofactor. It depends on Mn(2+) as a cofactor. The cofactor is Fe(2+).

It localises to the cytoplasm. The enzyme catalyses Release of N-terminal amino acids, preferentially methionine, from peptides and arylamides.. Functionally, cotranslationally removes the N-terminal methionine from nascent proteins. The N-terminal methionine is often cleaved when the second residue in the primary sequence is small and uncharged (Met-Ala-, Cys, Gly, Pro, Ser, Thr, or Val). In Leptosphaeria maculans (strain JN3 / isolate v23.1.3 / race Av1-4-5-6-7-8) (Blackleg fungus), this protein is Methionine aminopeptidase 2-1.